The chain runs to 352 residues: Alpha-2-HS-glycoprotein (352 aa).

The signal sequence occupies residues 1–18 (MKSLVLLLCFAQLWSCQS). The Cystatin fetuin-A-type 1 domain occupies 19-133 (APQGAGLGFR…QFRVLHAQCH (115 aa)). Intrachain disulfides connect Cys32–Cys343, Cys89–Cys100, Cys114–Cys132, Cys146–Cys149, Cys208–Cys219, and Cys230–Cys247. Residue Asn99 is glycosylated (N-linked (GlcNAc...) asparagine). Ser134 carries the post-translational modification Phosphoserine. Residue Thr135 is modified to Phosphothreonine. Residue Ser138 is modified to Phosphoserine. The Cystatin fetuin-A-type 2 domain occupies 144 to 250 (KFCPRCPILI…EEVSVACKLF (107 aa)). N-linked (GlcNAc...) asparagine glycosylation is found at Asn156 and Asn176. Positions 256–273 (PANANPAGPAPTVGQAAP) are enriched in low complexity. The tract at residues 256–280 (PANANPAGPAPTVGQAAPVAPPAGP) is disordered. Phosphoserine is present on residues Ser309, Ser313, Ser316, and Ser318. The interval 319–338 (GEVLHSPKVGQPGDAGAAGP) is disordered. The span at 328–338 (GQPGDAGAAGP) shows a compositional bias: low complexity.

The protein belongs to the fetuin family. Post-translationally, undergoes complex post-translational modification involving N-glycosylation, and addition of fucose and sialic acid residues. Phosphorylation occurs at a serine residue. In terms of processing, phosphorylated by FAM20C in the extracellular medium. Synthesized in liver and secreted by the hepatocytes in the blood.

The protein localises to the secreted. Its function is as follows. Could inhibit both insulin-receptor tyrosine kinase activity and insulin-stimulated receptor autophosphorylation and, concomitantly, antagonize the mitogenic effect of the hormone in cultured rat hepatoma cells. The protein is Alpha-2-HS-glycoprotein (Ahsg) of Rattus norvegicus (Rat).